A 1712-amino-acid chain; its full sequence is Collagen alpha-2(IV) chain (1712 aa).

Residues 1–25 (MGRDQRAVAGPALRRWLLLGTVTVG) form the signal peptide. Residues 26–183 (FLAQSVLAGV…LPKEERDRYR (158 aa)) constitute a propeptide, N-terminal propeptide (7S domain). Disordered regions lie at residues 60-237 (RGQP…GFYG), 302-448 (GLRG…PDGF), 507-640 (INGE…DAGL), 690-906 (GLPG…SPGF), and 1157-1480 (TGPP…GLPG). Positions 68–84 (PQGYNGPPGLQGFPGLQ) are enriched in low complexity. Gly residues predominate over residues 121 to 130 (GHPGQGGPRG). An N-linked (GlcNAc...) asparagine glycan is attached at Asn-138. Positions 140-153 (TQGDSGPQGPPGSE) are enriched in low complexity. Residues 175–186 (PKEERDRYRGEP) show a composition bias toward basic and acidic residues. The tract at residues 184–1484 (GEPGEPGLVG…SPGLPGMPGR (1301 aa)) is triple-helical region. Composition is skewed to pro residues over residues 215–224 (RPGPPGPPGP) and 433–445 (PPGP…PPGP). Composition is skewed to basic and acidic residues over residues 511–520 (PGRKGDRGDP) and 571–582 (KGDDGSPGRDGL). Composition is skewed to low complexity over residues 628–640 (LKGQ…DAGL) and 698–710 (TGAK…PGFA). Gly residues predominate over residues 711–720 (GADGGPGPRG). Residues 721-730 (LPGDAGREGF) show a composition bias toward low complexity. A compositionally biased stretch (pro residues) spans 752 to 766 (DGSPGPIGLPGPDGP). Low complexity-rich tracts occupy residues 769-778 (ERGLPGEVLG), 813-823 (MPGMPGLKGQP), 831-844 (QPGL…HGFP), 1302-1328 (GSAA…KGWA), and 1400-1421 (QPGT…EMGP). The region spanning 1489–1712 (GYLLVKHSQT…SRCQVCMKNL (224 aa)) is the Collagen IV NC1 domain. The residue at position 1490 (Tyr-1490) is a 3'-bromotyrosine. Cystine bridges form between Cys-1504-Cys-1593, Cys-1537-Cys-1590, Cys-1549-Cys-1555, Cys-1612-Cys-1708, Cys-1646-Cys-1705, and Cys-1658-Cys-1665.

This sequence belongs to the type IV collagen family. In terms of assembly, there are six type IV collagen isoforms, alpha 1(IV)-alpha 6(IV), each of which can form a triple helix structure with 2 other chains to generate type IV collagen network. Interacts with EFEMP2. Prolines at the third position of the tripeptide repeating unit (G-X-Y) are hydroxylated in some or all of the chains. Post-translationally, type IV collagens contain numerous cysteine residues which are involved in inter- and intramolecular disulfide bonding. 12 of these, located in the NC1 domain, are conserved in all known type IV collagens. In terms of processing, the trimeric structure of the NC1 domains is stabilized by covalent bonds between Lys and Met residues. Proteolytic processing produces the C-terminal NC1 peptide, canstatin.

It is found in the secreted. It localises to the extracellular space. Its subcellular location is the extracellular matrix. The protein localises to the basement membrane. Type IV collagen is the major structural component of glomerular basement membranes (GBM), forming a 'chicken-wire' meshwork together with laminins, proteoglycans and entactin/nidogen. Its function is as follows. Canstatin, a cleavage product corresponding to the collagen alpha 2(IV) NC1 domain, possesses both anti-angiogenic and anti-tumor cell activity. It inhibits proliferation and migration of endothelial cells, reduces mitochondrial membrane potential, and induces apoptosis. Specifically induces Fas-dependent apoptosis and activates procaspase-8 and -9 activity. Ligand for alphavbeta3 and alphavbeta5 integrins. The polypeptide is Collagen alpha-2(IV) chain (Homo sapiens (Human)).